Here is a 434-residue protein sequence, read N- to C-terminus: F-box/LRR-repeat protein 21 (434 aa).

One can recognise an F-box domain in the interval 39–85 (LLDWGNLPHHVVLRIFQYLPLIDRARASSVCRRWNEVFHIPDLWRKF). LRR repeat units lie at residues 187–213 (DTPVDDPSLSILVANNSGTLRRLKMSS), 214–239 (CPHVSSNGILCVADHCQGLRELALNY), 242–265 (LSDKLLLALSNETHVNLEHLRIDV), 322–347 (GRSVSKEILGRLGLNCPRLTELVVCA), 349–374 (GIQVIDTELICIAEHCKNLTALGLSE), and 375–400 (CEVSCSAFIEFVRLCGRKLTHLSIME).

Part of the SCF (SKP1-CUL1-F-box) E3 ubiquitin-protein ligase complex SCF(FBXL21) composed of CUL1, SKP1, RBX1 and FBXL21. Interacts with CRY1 and CRY2.

The protein resides in the cytoplasm. It localises to the cytosol. It is found in the nucleus. It participates in protein modification; protein ubiquitination. Substrate-recognition component of the SCF(FBXL21) E3 ubiquitin ligase complex involved in circadian rhythm function. Plays a key role in the maintenance of both the speed and the robustness of the circadian clock oscillation. The SCF(FBXL21) complex mainly acts in the cytosol and mediates ubiquitination of CRY proteins (CRY1 and CRY2), leading to CRY proteins stabilization. The SCF(FBXL21) complex counteracts the activity of the SCF(FBXL3) complex and protects CRY proteins from degradation. Involved in the hypothalamic suprachiasmatic nucleus (SCN) clock regulating temporal organization of the daily activities. In Bos taurus (Bovine), this protein is F-box/LRR-repeat protein 21 (FBXL21).